Here is a 2562-residue protein sequence, read N- to C-terminus: Zinc finger homeobox protein 2 (2562 aa).

A compositionally biased stretch (polar residues) spans 1 to 13 (MATLNSASPSGTV). 2 disordered regions span residues 1-88 (MATL…PPKD) and 337-410 (PSPP…DPPP). A compositionally biased stretch (basic and acidic residues) spans 56–73 (GGERLESGSDLDPPKEIG). 2 consecutive C2H2-type zinc fingers follow at residues 446–469 (LKCP…REKH) and 501–525 (YRCD…SDKH). 3 disordered regions span residues 530 to 559 (QGFQ…EPKT), 603 to 651 (PPGL…PDKP), and 669 to 705 (RKFP…PSPD). Over residues 609 to 622 (PGPPPPPGAAPTNP) the composition is skewed to pro residues. Positions 690 to 704 (LLGSSSDGLPTSPSP) are enriched in polar residues. 3 C2H2-type zinc fingers span residues 752–776 (HRCK…TDKH), 815–839 (LRCN…GSAH), and 864–888 (YHCL…TPAH). Positions 923–966 (RLQTPGKASDTPLAQPPTSEKDAQNKTEQQASEVTEDRSGPPRD) are disordered. A C2H2-type 6 zinc finger spans residues 1003-1026 (YRCPLCQEQLVGRPALHFHLSHLH). Disordered regions lie at residues 1058-1126 (NPVE…PAPR) and 1140-1166 (MSEE…HPLT). Composition is skewed to pro residues over residues 1091–1101 (SPDPPLEPPLA) and 1114–1124 (DQPPSPAPSPA). C2H2-type zinc fingers lie at residues 1185-1211 (YKCT…SHLH) and 1242-1266 (FKCT…SVLH). Residues 1278–1305 (RAEGAERGQEEFKEGETEGEAGTEKKGP) show a composition bias toward basic and acidic residues. Residues 1278-1313 (RAEGAERGQEEFKEGETEGEAGTEKKGPDPGGFMSG) are disordered. A C2H2-type 9 zinc finger spans residues 1474–1497 (LACGACGKLFSNMLILKTHEEHVH). The segment at 1520–1584 (LYPPPVEPPK…EGSRGSLPPA (65 aa)) is disordered. The span at 1521 to 1531 (YPPPVEPPKPP) shows a compositional bias: pro residues. The segment at residues 1589–1648 (RRFSRTKFTEFQTQALQSFFETSAYPKDGEVERLASLLGLASRVVVVWFQNARQKARKNA) is a DNA-binding region (homeobox 1). The C2H2-type 10; degenerate zinc-finger motif lies at 1664–1687 (SGCRRCHATFACVFELVRHLKKCY). Positions 1689–1760 (DQPPEEEEEA…EGKAPPSPPV (72 aa)) are disordered. A compositionally biased stretch (acidic residues) spans 1690–1713 (QPPEEEEEAERGEEEEEVEEEEAE). Positions 1743-1752 (TRPESKESEG) are enriched in basic and acidic residues. The C2H2-type 11 zinc finger occupies 1761–1783 (YACDQCAASFPSQDLLTTHHRLH). Disordered stretches follow at residues 1814 to 1853 (SGTS…KDKR), 1907 to 1934 (RKGQ…PAPF), 1971 to 2057 (PLPF…DSMG), 2114 to 2136 (KKAK…TSAA), 2186 to 2210 (PAPE…PLGA), 2263 to 2313 (QTAG…PNSS), and 2391 to 2429 (LQQP…LTGS). A DNA-binding region (homeobox 2) is located at residues 1851 to 1910 (DKRLRTTILPEQLEILYRWYMQDSNPTRKMLDCISEEVGLKKRVVQVWFQNTRARERKGQ). Positions 1985–1996 (TPEPPPPLPPPA) are enriched in pro residues. The segment covering 2008 to 2037 (KASPESEACSPSAGDLSDSSASSLAEPESP) has biased composition (low complexity). Positions 2038–2051 (GAGGTSGGPGGGTG) are enriched in gly residues. The segment at residues 2058–2117 (QRRYRTQMSSLQLKIMKACYEAYRTPTMQECEVLGEEIGLPKRVIQVWFQNARAKEKKAK) is a DNA-binding region (homeobox 3). Pro residues predominate over residues 2188 to 2200 (PETPLAPKGPPAT). A compositionally biased stretch (polar residues) spans 2275–2286 (PVSNQTNSSTDP). Over residues 2295–2305 (SGDKVSGERKP) the composition is skewed to basic and acidic residues. Positions 2395–2411 (PQAPEPTATAPPKPPEL) are enriched in pro residues. The C2H2-type 12; degenerate zinc-finger motif lies at 2441–2461 (YLCRQCKMAFDGEAPATAHQR). A C2H2-type 13 zinc finger spans residues 2485-2509 (YHCLACEVLLSGREALASHLRSSAH). Disordered stretches follow at residues 2506-2525 (SSAH…ITVT) and 2540-2562 (EEAR…LLAL). Residues 2553-2562 (TTTTSTLLAL) are compositionally biased toward low complexity.

In terms of tissue distribution, expressed in brain (at protein level). Expressed at the highest levels in the pyramidal cell layer of the hippocampus, the suprachiasmatic nucleus, laterodorsal thalamic nucleus, lateral geniculate nucleus, substantia nigra pars compacta, and magnocellular part of the red nucleus (at protein level). Highly expressed in dorsal root ganglia. Expressed at lower levels in kidney, stomach, liver, heart and testis.

It is found in the nucleus. Transcriptional regulator that is critical for the regulation of pain perception and processing of noxious stimuli. This chain is Zinc finger homeobox protein 2, found in Mus musculus (Mouse).